Reading from the N-terminus, the 253-residue chain is Sugar fermentation stimulation protein homolog (253 aa).

The protein belongs to the SfsA family.

The chain is Sugar fermentation stimulation protein homolog from Prochlorococcus marinus (strain NATL1A).